A 292-amino-acid polypeptide reads, in one-letter code: Ephrin type-A receptor 4a (292 aa).

Residues 1–9 (IGIGEFGEV) and lysine 27 each bind ATP. The Protein kinase domain occupies 1–265 (IGIGEFGEVC…QIVNMLDKLI (265 aa)). The active-site Proton acceptor is aspartate 120. Tyrosine 153 carries the phosphotyrosine; by autocatalysis modification.

Belongs to the protein kinase superfamily. Tyr protein kinase family. Ephrin receptor subfamily. As to expression, widely expressed in the developing nervous system.

It is found in the cell membrane. It localises to the early endosome. The catalysed reaction is L-tyrosyl-[protein] + ATP = O-phospho-L-tyrosyl-[protein] + ADP + H(+). Receptor tyrosine kinase which binds membrane-bound ephrin family ligands residing on adjacent cells, leading to contact-dependent bidirectional signaling into neighboring cells. The signaling pathway downstream of the receptor is referred to as forward signaling while the signaling pathway downstream of the ephrin ligand is referred to as reverse signaling. Highly promiscuous, it has the unique property among Eph receptors to bind and to be physiologically activated by both GPI-anchored ephrin-A and transmembrane ephrin-B ligands including efna1 and efnb3. Upon activation by ephrin ligands, modulates cell morphology and integrin-dependent cell adhesion through regulation of the Rac, Rap and Rho GTPases activity. Plays an important role in the development of the nervous system controlling different steps of axonal guidance including the establishment of the corticospinal projections. The sequence is that of Ephrin type-A receptor 4a (epha4a) from Danio rerio (Zebrafish).